The chain runs to 572 residues: Proline--tRNA ligase (572 aa).

This sequence belongs to the class-II aminoacyl-tRNA synthetase family. ProS type 1 subfamily. In terms of assembly, homodimer.

Its subcellular location is the cytoplasm. It carries out the reaction tRNA(Pro) + L-proline + ATP = L-prolyl-tRNA(Pro) + AMP + diphosphate. Catalyzes the attachment of proline to tRNA(Pro) in a two-step reaction: proline is first activated by ATP to form Pro-AMP and then transferred to the acceptor end of tRNA(Pro). As ProRS can inadvertently accommodate and process non-cognate amino acids such as alanine and cysteine, to avoid such errors it has two additional distinct editing activities against alanine. One activity is designated as 'pretransfer' editing and involves the tRNA(Pro)-independent hydrolysis of activated Ala-AMP. The other activity is designated 'posttransfer' editing and involves deacylation of mischarged Ala-tRNA(Pro). The misacylated Cys-tRNA(Pro) is not edited by ProRS. This Shigella dysenteriae serotype 1 (strain Sd197) protein is Proline--tRNA ligase.